The following is a 954-amino-acid chain: Glycine dehydrogenase (decarboxylating) (954 aa).

An N6-(pyridoxal phosphate)lysine modification is found at K704.

This sequence belongs to the GcvP family. The glycine cleavage system is composed of four proteins: P, T, L and H. Pyridoxal 5'-phosphate serves as cofactor.

It carries out the reaction N(6)-[(R)-lipoyl]-L-lysyl-[glycine-cleavage complex H protein] + glycine + H(+) = N(6)-[(R)-S(8)-aminomethyldihydrolipoyl]-L-lysyl-[glycine-cleavage complex H protein] + CO2. In terms of biological role, the glycine cleavage system catalyzes the degradation of glycine. The P protein binds the alpha-amino group of glycine through its pyridoxal phosphate cofactor; CO(2) is released and the remaining methylamine moiety is then transferred to the lipoamide cofactor of the H protein. The polypeptide is Glycine dehydrogenase (decarboxylating) (Vibrio parahaemolyticus serotype O3:K6 (strain RIMD 2210633)).